The primary structure comprises 1299 residues: Probable membrane antigen 75 (1299 aa).

Its subcellular location is the virion tegument. In Saimiriine herpesvirus 2 (strain 11) (SaHV-2), this protein is Probable membrane antigen 75 (75).